The sequence spans 261 residues: Transmembrane and immunoglobulin domain-containing protein 1 (261 aa).

An N-terminal signal peptide occupies residues 1–26 (MVWKITGPLQACQLLLVVLSLPQGRT). The region spanning 27 to 113 (SSVLTVNGRT…LQRDQTVSVT (87 aa)) is the Ig-like C2-type 1 domain. Topologically, residues 27-215 (SSVLTVNGRT…DFHLLVKDKV (189 aa)) are extracellular. A disulfide bond links Cys53 and Cys102. Asn57, Asn82, Asn92, Asn117, Asn157, and Asn189 each carry an N-linked (GlcNAc...) asparagine glycan. The region spanning 121 to 206 (PPLLSGNGFQ…SSSLKMETMD (86 aa)) is the Ig-like C2-type 2 domain. Cys142 and Cys194 form a disulfide bridge. The chain crosses the membrane as a helical span at residues 216–236 (FVMPAEPIIAACVVVVLTMAF). The Cytoplasmic segment spans residues 237 to 261 (ALFSRRKRIMKLCGKKNDPNSETAL).

As to quaternary structure, homodimer. Post-translationally, N-glycosylated.

Its subcellular location is the cell membrane. The protein localises to the cytoplasm. May control cell-cell adhesion, cell migration and proliferation, cell morphology, and protects renal epithelial cells from oxidative cell injury to promote cell survival. This Mus musculus (Mouse) protein is Transmembrane and immunoglobulin domain-containing protein 1.